The primary structure comprises 276 residues: NADH-cytochrome b5 reductase 2 (276 aa).

Residues 15-127 enclose the FAD-binding FR-type domain; the sequence is EAKYPLPLIE…RGPTGRLFYN (113 aa). Lysine 17 carries the post-translational modification N6-acetyllysine. Tyrosine 18 is subject to Phosphotyrosine. FAD is bound by residues 107 to 137 and 146 to 181; these read ENMKIGDTILFRGPTGRLFYNEPGTLLIKAN and LVHHLGMIAGGTGITPMLQLIRHITKDTSDETRMSL.

It belongs to the flavoprotein pyridine nucleotide cytochrome reductase family. It depends on FAD as a cofactor.

It carries out the reaction 2 Fe(III)-[cytochrome b5] + NADH = 2 Fe(II)-[cytochrome b5] + NAD(+) + H(+). Its function is as follows. NADH-cytochrome b5 reductases are involved in desaturation and elongation of fatty acids, cholesterol biosynthesis, drug metabolism, and, in erythrocyte, methemoglobin reduction. Responsible for NADH-dependent lucigenin chemiluminescence in spermatozoa by reducing both lucigenin and 2-[4-iodophenyl]-3-[4-nitrophenyl]-5-[2,4-disulfophenyl]-2H tetrazolium monosodium salt (WST-1). This is NADH-cytochrome b5 reductase 2 (Cyb5r2) from Mus musculus (Mouse).